A 556-amino-acid polypeptide reads, in one-letter code: Arginine--tRNA ligase (556 aa).

Positions 129–139 match the 'HIGH' region motif; the sequence is ANPTGPLHVGH.

This sequence belongs to the class-I aminoacyl-tRNA synthetase family. Monomer.

It is found in the cytoplasm. It catalyses the reaction tRNA(Arg) + L-arginine + ATP = L-arginyl-tRNA(Arg) + AMP + diphosphate. This is Arginine--tRNA ligase from Desulfosudis oleivorans (strain DSM 6200 / JCM 39069 / Hxd3) (Desulfococcus oleovorans).